The following is a 329-amino-acid chain: DNA-directed RNA polymerase subunit alpha (329 aa).

The segment at 1 to 235 (MQGSVTEFLK…EQLDAFVDLR (235 aa)) is alpha N-terminal domain (alpha-NTD). An alpha C-terminal domain (alpha-CTD) region spans residues 249–329 (FDPILLRPVD…NWPPASIAED (81 aa)).

The protein belongs to the RNA polymerase alpha chain family. Homodimer. The RNAP catalytic core consists of 2 alpha, 1 beta, 1 beta' and 1 omega subunit. When a sigma factor is associated with the core the holoenzyme is formed, which can initiate transcription.

The enzyme catalyses RNA(n) + a ribonucleoside 5'-triphosphate = RNA(n+1) + diphosphate. Functionally, DNA-dependent RNA polymerase catalyzes the transcription of DNA into RNA using the four ribonucleoside triphosphates as substrates. In Actinobacillus pleuropneumoniae serotype 5b (strain L20), this protein is DNA-directed RNA polymerase subunit alpha.